Here is a 319-residue protein sequence, read N- to C-terminus: CCAAT/enhancer-binding protein homolog 1 (319 aa).

Residues 53–67 (SLTIAASLQQRDRER) are n' domain; required for axon regeneration. Residues 163 to 319 (TRRAVKRPVP…QRHILENFNK (157 aa)) are disordered. Basic and acidic residues predominate over residues 171 to 181 (VPYDDYQKEYS). The span at 182–198 (EESSDMTDNDGSVDDSY) shows a compositional bias: acidic residues. Basic and acidic residues-rich tracts occupy residues 225 to 248 (LKAD…DAVR), 255 to 274 (KELQ…RIAE), 281 to 291 (SERDARRRDQD), and 302 to 319 (PMKE…NFNK). Residues 233 to 308 (EPTYKLKRAR…NKGPMKEQRM (76 aa)) form the bZIP domain. The interval 237–271 (KLKRARNNDAVRKSRKKAKELQDKKEAEHDKMKRR) is basic motif. A leucine-zipper region spans residues 275–308 (LEGLLQSERDARRRDQDTLEQLLRNKGPMKEQRM).

This sequence belongs to the bZIP family. C/EBP subfamily. May interact with transcription factor ets-4. May interact (via N-terminus) with nipi-3. May interact (via N-terminus) with importin subunit alpha ima-3. Expressed in touch and motor neurons.

It localises to the synapse. The protein resides in the cytoplasm. Its subcellular location is the nucleus. It is found in the cell projection. The protein localises to the axon. In terms of biological role, transcription factor. Binds to promoter regions of target genes, perhaps at the motif 5'-[AGCT]TT[AGT][TC]GAAA[ACT]-3'. Modulates expression of genes involved in development and in stress responses, including those regulating the p38/MAPK signaling pathways such as MAPKK sek-1 and phosphatase vhp-1. Involved in innate immunity. Plays a role in repressing the response to infection by the Gram-negative bacterium P.aeruginosa, perhaps acting independently of the pmk-1 or pmk-3 p38/MAPK pathways. However, also plays a protective role in the response to infection by P.aeruginosa. Required in axonal regrowth following injury and synaptogenesis. Following axon injury, in concert with transcription factor ets-4, activates expression of receptor tyrosine kinase svh-2. May function downstream of the Ca2+-activated p38/MAPK pathway to promote axon regeneration. Plays a role in modulating polymerization of neuronal microtubules. Involved in modulating lipid homeostasis. This Caenorhabditis elegans protein is CCAAT/enhancer-binding protein homolog 1.